The primary structure comprises 122 residues: MIQTETRLEVADNTGAREVMCIKVLGGSKRRYASIGDIIKVTVKEATPRGRVKKGEIYNAVVVRTAKGVRRQDGSLIKFDGNAAVLLNAKLEPIGTRIFGPVTRELRSERFMKIVSLAPEVL.

Belongs to the universal ribosomal protein uL14 family. As to quaternary structure, part of the 50S ribosomal subunit. Forms a cluster with proteins L3 and L19. In the 70S ribosome, L14 and L19 interact and together make contacts with the 16S rRNA in bridges B5 and B8.

In terms of biological role, binds to 23S rRNA. Forms part of two intersubunit bridges in the 70S ribosome. The protein is Large ribosomal subunit protein uL14 of Paraburkholderia phytofirmans (strain DSM 17436 / LMG 22146 / PsJN) (Burkholderia phytofirmans).